Consider the following 282-residue polypeptide: Farnesyl diphosphate synthase (282 aa).

Positions 45, 48, and 77 each coordinate isopentenyl diphosphate. The Mg(2+) site is built by Asp-84 and Asp-90. Arg-95 is a binding site for (2E)-geranyl diphosphate. Isopentenyl diphosphate is bound at residue Arg-96. 3 residues coordinate (2E)-geranyl diphosphate: Lys-181, Thr-182, and Gln-220.

Belongs to the FPP/GGPP synthase family. The cofactor is Mg(2+).

The protein resides in the cytoplasm. The enzyme catalyses isopentenyl diphosphate + (2E)-geranyl diphosphate = (2E,6E)-farnesyl diphosphate + diphosphate. This Buchnera aphidicola subsp. Acyrthosiphon pisum (strain APS) (Acyrthosiphon pisum symbiotic bacterium) protein is Farnesyl diphosphate synthase (ispA).